The primary structure comprises 313 residues: uncharacterized protein (313 aa).

It to M.jannaschii MJ0977 C-terminal region.

This is an uncharacterized protein from Methanocaldococcus jannaschii (strain ATCC 43067 / DSM 2661 / JAL-1 / JCM 10045 / NBRC 100440) (Methanococcus jannaschii).